The primary structure comprises 182 residues: MADSENQGPAEPSQAAAAAEAAAEEVMAEGGAQGGDCDSAAGDPDSAAGQMAEEPQTPAENAPKPKNDFIESLPNSVKCRVLALKKLQKRCDKIEAKFDKEFQALEKKYNDIYKPLLAKIQELTGEMEGCAWTLEGEEEEEEEYEDDEEEGEDEEEEEAAAEAAAGAKHDDAHAEMPDDAKK.

Positions 1–71 (MADSENQGPA…APKPKNDFIE (71 aa)) are disordered. Low complexity-rich tracts occupy residues 7–21 (QGPAEPSQAAAAAEA) and 28–49 (AEGGAQGGDCDSAAGDPDSAAG). Positions 81–107 (VLALKKLQKRCDKIEAKFDKEFQALEK) form a coiled coil. The disordered stretch occupies residues 134 to 182 (LEGEEEEEEEYEDDEEEGEDEEEEEAAAEAAAGAKHDDAHAEMPDDAKK). Residues 135-160 (EGEEEEEEEYEDDEEEGEDEEEEEAA) show a composition bias toward acidic residues. The span at 167–182 (AKHDDAHAEMPDDAKK) shows a compositional bias: basic and acidic residues.

This sequence belongs to the nucleosome assembly protein (NAP) family. As to expression, predominantly expressed in brain.

The protein localises to the nucleus. The sequence is that of Nucleosome assembly protein 1-like 5 (NAP1L5) from Homo sapiens (Human).